A 223-amino-acid chain; its full sequence is DNA mismatch repair protein MutH (223 aa).

This sequence belongs to the MutH family.

It is found in the cytoplasm. Functionally, sequence-specific endonuclease that cleaves unmethylated GATC sequences. It is involved in DNA mismatch repair. The sequence is that of DNA mismatch repair protein MutH from Shewanella baltica (strain OS223).